Consider the following 149-residue polypeptide: D-aminoacyl-tRNA deacylase (149 aa).

A Gly-cisPro motif, important for rejection of L-amino acids motif is present at residues 137-138 (GP).

Belongs to the DTD family. Homodimer.

It localises to the cytoplasm. It carries out the reaction glycyl-tRNA(Ala) + H2O = tRNA(Ala) + glycine + H(+). The enzyme catalyses a D-aminoacyl-tRNA + H2O = a tRNA + a D-alpha-amino acid + H(+). Its function is as follows. An aminoacyl-tRNA editing enzyme that deacylates mischarged D-aminoacyl-tRNAs. Also deacylates mischarged glycyl-tRNA(Ala), protecting cells against glycine mischarging by AlaRS. Acts via tRNA-based rather than protein-based catalysis; rejects L-amino acids rather than detecting D-amino acids in the active site. By recycling D-aminoacyl-tRNA to D-amino acids and free tRNA molecules, this enzyme counteracts the toxicity associated with the formation of D-aminoacyl-tRNA entities in vivo and helps enforce protein L-homochirality. The chain is D-aminoacyl-tRNA deacylase from Clostridioides difficile (strain 630) (Peptoclostridium difficile).